The chain runs to 352 residues: UDP-N-acetylglucosamine--N-acetylmuramyl-(pentapeptide) pyrophosphoryl-undecaprenol N-acetylglucosamine transferase (352 aa).

Ser195 and Gln287 together coordinate UDP-N-acetyl-alpha-D-glucosamine.

This sequence belongs to the glycosyltransferase 28 family. MurG subfamily.

It localises to the cell membrane. The enzyme catalyses Mur2Ac(oyl-L-Ala-gamma-D-Glu-L-Lys-D-Ala-D-Ala)-di-trans,octa-cis-undecaprenyl diphosphate + UDP-N-acetyl-alpha-D-glucosamine = beta-D-GlcNAc-(1-&gt;4)-Mur2Ac(oyl-L-Ala-gamma-D-Glu-L-Lys-D-Ala-D-Ala)-di-trans,octa-cis-undecaprenyl diphosphate + UDP + H(+). It functions in the pathway cell wall biogenesis; peptidoglycan biosynthesis. Functionally, cell wall formation. Catalyzes the transfer of a GlcNAc subunit on undecaprenyl-pyrophosphoryl-MurNAc-pentapeptide (lipid intermediate I) to form undecaprenyl-pyrophosphoryl-MurNAc-(pentapeptide)GlcNAc (lipid intermediate II). The chain is UDP-N-acetylglucosamine--N-acetylmuramyl-(pentapeptide) pyrophosphoryl-undecaprenol N-acetylglucosamine transferase from Streptococcus pneumoniae (strain CGSP14).